The sequence spans 817 residues: LPS-assembly protein LptD (817 aa).

A signal peptide spans 1-45 (MDRLPLPHALHVPTHRPFAAPLPPRRLLARLAALMLCGVPLAVLA).

This sequence belongs to the LptD family. As to quaternary structure, component of the lipopolysaccharide transport and assembly complex. Interacts with LptE and LptA.

The protein localises to the cell outer membrane. Its function is as follows. Together with LptE, is involved in the assembly of lipopolysaccharide (LPS) at the surface of the outer membrane. The sequence is that of LPS-assembly protein LptD from Acidovorax sp. (strain JS42).